Here is an 88-residue protein sequence, read N- to C-terminus: Putative membrane protein insertion efficiency factor (88 aa).

It belongs to the UPF0161 family.

It localises to the cell inner membrane. Its function is as follows. Could be involved in insertion of integral membrane proteins into the membrane. This chain is Putative membrane protein insertion efficiency factor, found in Rickettsia canadensis (strain McKiel).